The sequence spans 196 residues: Proteasome subunit beta 2 (196 aa).

Positions 1–6 are cleaved as a propeptide — removed in mature form; by autocatalysis; sequence MEELPS. The active-site Nucleophile is T7.

It belongs to the peptidase T1B family. The 20S proteasome core is composed of 14 alpha and 14 beta subunits that assemble into four stacked heptameric rings, resulting in a barrel-shaped structure. The two inner rings, each composed of seven catalytic beta subunits, are sandwiched by two outer rings, each composed of seven alpha subunits. The catalytic chamber with the active sites is on the inside of the barrel. Has a gated structure, the ends of the cylinder being occluded by the N-termini of the alpha-subunits. Is capped at one or both ends by the proteasome regulatory ATPase, PAN.

It localises to the cytoplasm. It carries out the reaction Cleavage of peptide bonds with very broad specificity.. Its activity is regulated as follows. The formation of the proteasomal ATPase PAN-20S proteasome complex, via the docking of the C-termini of PAN into the intersubunit pockets in the alpha-rings, triggers opening of the gate for substrate entry. Interconversion between the open-gate and close-gate conformations leads to a dynamic regulation of the 20S proteasome proteolysis activity. Functionally, component of the proteasome core, a large protease complex with broad specificity involved in protein degradation. The protein is Proteasome subunit beta 2 of Metallosphaera sedula (strain ATCC 51363 / DSM 5348 / JCM 9185 / NBRC 15509 / TH2).